A 209-amino-acid chain; its full sequence is Uracil phosphoribosyltransferase (209 aa).

5-phospho-alpha-D-ribose 1-diphosphate-binding positions include Arg-79, Arg-104, and 131 to 139 (DPMLATGGS). Residues Ile-194 and 199-201 (GDA) each bind uracil. Asp-200 is a 5-phospho-alpha-D-ribose 1-diphosphate binding site.

The protein belongs to the UPRTase family. The cofactor is Mg(2+).

It carries out the reaction UMP + diphosphate = 5-phospho-alpha-D-ribose 1-diphosphate + uracil. It participates in pyrimidine metabolism; UMP biosynthesis via salvage pathway; UMP from uracil: step 1/1. Its activity is regulated as follows. Allosterically activated by GTP. Catalyzes the conversion of uracil and 5-phospho-alpha-D-ribose 1-diphosphate (PRPP) to UMP and diphosphate. This chain is Uracil phosphoribosyltransferase, found in Exiguobacterium sp. (strain ATCC BAA-1283 / AT1b).